An 85-amino-acid chain; its full sequence is MEASSEPPLDAKSDVTNQLVDFQWKLGMAVSSDTCRSLKYPYVAVMLKVADHSGQVKTKCFEMTIPQFQNFYRQFKEIAAVIETV.

The residue at position 1 (Met-1) is an N-acetylmethionine. The 68-residue stretch at 18 to 85 (QLVDFQWKLG…KEIAAVIETV (68 aa)) folds into the COMM domain.

It belongs to the COMM domain-containing protein 6 family. Component of the commander complex consisting of the CCC subcomplex and the retriever subcomplex. Component of the CCC (COMMD/CCDC22/CCDC93) subcomplex consisting of COMMD1, COMMD2, COMMD3, COMMD4, COMMD5, COMMD6, COMMD7, COMMD8, COMMD9, COMMD10, CCDC22 and CCDC93; within the complex forms a heterodimer with COMMD1. May form a homodimer with isoform 1. Interacts with RELA, RELB, NFKB1/p105. Does not interact with NFKBIB. Interacts with CCDC22, CCDC93, SCNN1B, CUL4A. In terms of tissue distribution, ubiquitous. Expressed in brain, heart, skeletal muscle, lung, pancreas, liver, kidney, small intestine and placenta.

It localises to the nucleus. It is found in the cytoplasm. In terms of biological role, scaffold protein in the commander complex that is essential for endosomal recycling of transmembrane cargos; the commander complex is composed of the CCC subcomplex and the retriever subcomplex. May modulate activity of cullin-RING E3 ubiquitin ligase (CRL) complexes. Down-regulates activation of NF-kappa-B. Inhibits TNF-induced NFKB1 activation. This is COMM domain-containing protein 6 (COMMD6) from Homo sapiens (Human).